The following is a 515-amino-acid chain: 13S globulin seed storage protein (515 aa).

The first 22 residues, 1–22 (MSTKLILSFSLCLMVLSCSAQA), serve as a signal peptide directing secretion. Residues 23 to 96 (AQLWPWRKGQ…RYVIQPGGLL (74 aa)) are igE-binding epitope. 2 disulfides stabilise this stretch: Cys47/Cys80 and Cys123/Cys327. In terms of domain architecture, Cupin type-1 1 spans 52–272 (LTASEPSRRV…FRDVDRETIS (221 aa)). An igE-binding epitope with a very strong IgE-binding activity region spans residues 97–172 (LPSYSNAPYI…REGDVIPSPA (76 aa)). 3 disordered regions span residues 123–156 (CPET…GDQH), 210–241 (LAGQ…ESDD), and 295–320 (PEDS…GRSN). Composition is skewed to basic and acidic residues over residues 141 to 156 (HSRE…GDQH), 217 to 239 (GREE…SRES), and 295 to 316 (PEDS…ERGS). 2 igE-binding epitope regions span residues 173–248 (GVVQ…LIGA) and 249–320 (NILS…GRSN). The 150-residue stretch at 333 to 482 (QNVNRPSHAD…SYDISTEEAY (150 aa)) folds into the Cupin type-1 2 domain. Residues 347–387 (RAGRINTVNSNNLPILEFLQLSAQHVVLYKNAIIGPRWNLN) are igE-binding epitope with a strong IgE-binding activity. 3 igE-binding epitope regions span residues 407 to 457 (EGKS…PIAG), 440 to 476 (EWVE…SYDI), and 475 to 511 (DIST…ERER).

Belongs to the 11S seed storage protein (globulins) family. Homohexamer. Post-translationally, proteolytically processed from a single precursor to produce an acidic and a basic chain that are linked by a disulfide bond. In terms of tissue distribution, expressed in seeds (at protein level).

Its function is as follows. Seed storage protein. This chain is 13S globulin seed storage protein, found in Fagopyrum tataricum (Tartarian buckwheat).